We begin with the raw amino-acid sequence, 1233 residues long: NACHT, LRR and PYD domains-containing protein 1b allele 1 (1233 aa).

The tract at residues 1–22 (MEESPPKQKSNTKVAQHEGQQD) is disordered. The 310-residue stretch at 126–435 (QLVIIEGAAG…EFFAAISCIL (310 aa)) folds into the NACHT domain. 132 to 139 (GAAGIGKS) contributes to the ATP binding site. LRR repeat units follow at residues 627-647 (NLEG…QSLC) and 684-704 (SLTE…RMLC). Positions 850–983 (FWGPIGPVAT…GYTVLKNPSF (134 aa)) are ZU5. The region spanning 850–1133 (FWGPIGPVAT…LRPALPRIAQ (284 aa)) is the FIIND domain. A UPA region spans residues 984-1133 (SPMGVVLRII…LRPALPRIAQ (150 aa)). The CARD domain occupies 1143 to 1226 (HFMDQHREQL…HLVMDLLEKS (84 aa)).

The protein belongs to the NLRP family. Interacts with DPP9; leading to inhibit activation of the inflammasome. DPP9 acts via formation of a ternary complex, composed of a DPP9 homodimer, one full-length Nlrp1b protein, and one cleaved C-terminus of Nlrp1b (NACHT, LRR and PYD domains-containing protein 1b, C-terminus). Interacts with DPP8; leading to inhibit activation of the inflammasome, probably via formation of a ternary complex with DPP8. Interacts (via LRR repeats) with BCL2 and BCL2L1 (via the loop between motifs BH4 and BH3). Interacts with NOD2; this interaction may increase IL1B release. Interacts with EIF2AK2/PKR; this interaction requires EIF2AK2 activity, is accompanied by EIF2AK2 autophosphorylation and promotes inflammasome assembly in response to B.anthracis lethal toxin. Interacts with MEFV; this interaction targets Nlrp1b to degradation by autophagy, hence preventing excessive IL1B- and IL18-mediated inflammation. In terms of assembly, interacts with the C-terminal part of Nlrp1b (NACHT, LRR and PYD domains-containing protein 1b, C-terminus) in absence of pathogens and other damage-associated signals. As to quaternary structure, interacts with the N-terminal part of Nlrp1b (NACHT, LRR and PYD domains-containing protein 1b, N-terminus) in absence of pathogens and other damage-associated signals. Homomultimer; forms the Nlrp1b inflammasome polymeric complex, a filament composed of homopolymers of this form in response to pathogens and other damage-associated signals. The Nlrp1b inflammasome polymeric complex directly recruits pro-caspase-1 (proCASP1) independently of PYCARD/ASC. Interacts (via CARD domain) with CASP1 (via CARD domain); leading to CASP1 activation. Autocatalytically cleaved. Autocatalytic cleavage in FIIND region occurs constitutively, prior to activation signals, and is required for inflammasome activity (IL1B release), possibly by facilitating CASP1 binding. Both N- and C-terminal parts remain associated non-covalently. Post-translationally, ubiquitinated by UBR2, a component of the N-end rule pathway in response to pathogens and other damage-associated signals, leading to its degradation by the proteasome and subsequent release of the cleaved C-terminal part of the protein (NACHT, LRR and PYD domains-containing protein 1b, C-terminus), which polymerizes and forms the Nlrp1b inflammasome. In terms of processing, (Microbial infection) Cleavage by B.anthracis lethal toxin (LT) endopeptidase promotes ubiquitination and degradation of the N-terminal part, releasing the cleaved C-terminal part of the protein (NACHT, LRR and PYD domains-containing protein 1b, C-terminus), which polymerizes and forms the Nlrp1b inflammasome. (Microbial infection) Ubiquitinated by S.flexneri IpaH7.8, leading to its degradation by the proteasome and subsequent release of the cleaved C-terminal part of the protein (NACHT, LRR and PYD domains-containing protein 1b, C-terminus), which polymerizes and forms the Nlrp1b inflammasome. As to expression, widely expressed, including in macrophages.

It is found in the cytoplasm. The protein resides in the cytosol. It localises to the membrane. Its subcellular location is the inflammasome. Its activity is regulated as follows. Activated by cleavage by B.anthracis lethal toxin (LT) endopeptidase: cleavage by LT promotes ubiquitination and degradation of the N-terminal part, releasing the cleaved C-terminal part of the protein (NACHT, LRR and PYD domains-containing protein 1b, C-terminus), which polymerizes and forms the Nlrp1b inflammasome. Activated by S.flexneri IpaH7.8, an E3 ubiquitin ligase that mediates ubiquitination and degradation of the N-terminal part, releasing the cleaved C-terminal part of the protein, which polymerizes and forms the Nlrp1b inflammasome. Nlrp1b inflammasome is inhibited by DPP8 and DPP9, which sequester the C-terminal fragment of Nlrp1b (NACHT, LRR and PYD domains-containing protein 1b, C-terminus) in a ternary complex, thereby preventing Nlrp1b oligomerization and activation. Nlrp1b inflammasome is activated by Val-boroPro (Talabostat, PT-100), an inhibitor of dipeptidyl peptidases DPP8 and DPP9. Val-boroPro relieves inhibition of DPP8 and/or DPP9 by promoting disruption of the ternary complex, releasing its C-terminal part from autoinhibition. Activated by metabolic inhibitors, such as 2-deoxy-D-glucose and sodium azide, by nutrient deprivation and hypoxia, possibly due to a decrease in cytosolic ATP. Also activated by Toxoplasma gondii. Not activated by muramyl dipeptide, nor by full-length bacterial peptidoglycan. Contrary to its human ortholog, not activated by positive-strand RNA virus such as Semliki Forrest virus or long dsRNA. Its function is as follows. Acts as the sensor component of the Nlrp1b inflammasome, which mediates inflammasome activation in response to various pathogen-associated signals, leading to subsequent pyroptosis. Inflammasomes are supramolecular complexes that assemble in the cytosol in response to pathogens and other damage-associated signals and play critical roles in innate immunity and inflammation. Acts as a recognition receptor (PRR): recognizes specific pathogens and other damage-associated signals, such as B.anthracis lethal toxin (LT) or Val-boroPro inhibitor, and mediates the formation of the inflammasome polymeric complex. In response to pathogen-associated signals, the N-terminal part of Nlrp1b is degraded by the proteasome, releasing the cleaved C-terminal part of the protein (NACHT, LRR and PYD domains-containing protein 1b, C-terminus), which polymerizes to initiate the formation of the inflammasome complex: the inflammasome directly recruits pro-caspase-1 (proCASP1) independently of PYCARD/ASC and promotes caspase-1 (CASP1) activation, which subsequently cleaves and activates inflammatory cytokines IL1B and IL18 and gasdermin-D (GSDMD), leading to pyroptosis. In the absence of GSDMD expression, the Nlrp1b inflammasome is able to recruit and activate CASP8, leading to activation of gasdermin-E (GSDME). Activation of Nlrp1b inflammasome is also required for HMGB1 secretion; the active cytokines and HMGB1 stimulate inflammatory responses. Primary mediator of macrophage susceptibility to B.anthracis LT: in response to B.anthracis infection, macrophages and dendritic cells release IL1B and undergo pyroptosis. This early inflammatory response to the toxin increases resistance to infection by B.anthracis spores. In terms of biological role, constitutes the precursor of the Nlrp1b inflammasome, which mediates autoproteolytic processing within the FIIND domain to generate the N-terminal and C-terminal parts, which are associated non-covalently in absence of pathogens and other damage-associated signals. Regulatory part that prevents formation of the Nlrp1b inflammasome: in absence of pathogens and other damage-associated signals, interacts with the C-terminal part of Nlrp1b (NACHT, LRR and PYD domains-containing protein 1b, C-terminus), preventing activation of the Nlrp1b inflammasome. In response to pathogen-associated signals, this part is ubiquitinated by the N-end rule pathway and degraded by the proteasome, releasing the cleaved C-terminal part of the protein, which polymerizes and forms the Nlrp1b inflammasome. Functionally, constitutes the active part of the Nlrp1b inflammasome. In absence of pathogens and other damage-associated signals, interacts with the N-terminal part of Nlrp1b (NACHT, LRR and PYD domains-containing protein 1b, N-terminus), preventing activation of the Nlrp1b inflammasome. In response to pathogen-associated signals, the N-terminal part of Nlrp1b is degraded by the proteasome, releasing this form, which polymerizes to form the Nlrp1b inflammasome complex: the Nlrp1b inflammasome complex then directly recruits pro-caspase-1 (proCASP1) and promotes caspase-1 (CASP1) activation, leading to gasdermin-D (GSDMD) cleavage and subsequent pyroptosis. This Mus musculus (Mouse) protein is NACHT, LRR and PYD domains-containing protein 1b allele 1.